Here is a 1017-residue protein sequence, read N- to C-terminus: MKFLKLPQSYHNGGIHSIDVNQDNTILVSGGTDNKIGVWNLKKLIELSKLVSTHNSPEVRLKLKSLEPKQYITCHKSLINVVRFFKGDNKRFISSDVNGNVFFHTLHEQPETKQLFPFKSIETSEVNPVVDLTISADNRLIAWSTNNGKVYLYDVVKDTFQELTSICHEKPIIQRSIAFDPSNNYLITVGDDTQINVFQYSYEKDDTSTTTYKFRLIYKISKLFSQNPLNVRYKRISWSPDGNLVSIPTASKNQTMLISLISRSEKWTNIESLVGHDFACDVVKFNPKIFSSKENDTSKVHSVIASGGSDRTMAIWNTSKSTPITVLQDAVQGEILDITWTTDGTSLLFCTSQGKLCIGNFEPNELGYTFSQETMERFVQLQNNLIEPMNFRYPHEQTVGNRKQLPPIEFLSQKNAISTTTSSSNTVENDKKNAEDNVGVSNQSKSTTTTTTTTIKGGVITPEVIPPPKLQSLDDDIDGDGDDEEHKSGGMLDSVMNDRTQSSPRKLNKPKPIAPVVSDSTTQSLSFNKQKVTTKNGKRRIQPMLISSGNSAPSDLPRSNSVIKPVVNTTKSTMEFEKPSYSVSEEFYKQNKRPRTEETTGSNNNKKLKREMEPVKFIGSVILNPNTSFSKIRLATPKVRLFFQLKSKTDDDGVFILDIKNGSGNESKPSRLTYMKKDKEIWCDFIPKYIQLATEGSNFWAVTTVDGTILTYSHVSGKRLLPSIVLGSPISFLESYDKYLMVVTCIGELYVWDMEIKKNVLKSSISPLLELYNKEGLVKSDNITLCAVTSYGIPLVTLSNGSGYLFNKDLGVWQTITESWWCFGSHYWDSTQTGNSSGGGGGSGGSNNKRSLQTMNMFNDEQSIIELLEHKTNEEILRKTRTGRGKYFNKISKNMLMKEGFESLENTISISHLENRILCCELLGENKDFHKFFTTYVQRICELGFKAKLFEVCDELLGPIDTDTAKPPNENNWEPKICGFDKRELLKEIITSCSQFRDAQRVLVHFGKKIGVVIDES.

WD repeat units follow at residues Tyr-10–Lys-49, Cys-74–Pro-117, Ser-124–Leu-163, Cys-167–Ser-208, Pro-228–Glu-271, Gly-275–Val-326, and Ala-330–Ser-371. Residues Ile-417–Ser-561 are disordered. Over residues Leu-473 to Asp-483 the composition is skewed to acidic residues. Composition is skewed to polar residues over residues Ser-518–Lys-535 and Leu-545–Ser-561.

The protein belongs to the WD repeat HIR1 family.

It is found in the nucleus. Its function is as follows. Required for replication-independent chromatin assembly and for the periodic repression of histone gene transcription during the cell cycle. This Candida albicans (strain SC5314 / ATCC MYA-2876) (Yeast) protein is Protein HIR2 (HIR2).